We begin with the raw amino-acid sequence, 357 residues long: Histidine biosynthesis bifunctional protein HisB (357 aa).

A histidinol-phosphatase region spans residues 1 to 168 (MSEKVLFIDR…IVFKLTKKHD (168 aa)). The active-site Nucleophile is D9. 2 residues coordinate Mg(2+): D9 and D11. The active-site Proton donor is D11. Zn(2+) contacts are provided by C93, H95, C101, and C103. Residue D130 coordinates Mg(2+). The interval 169–357 (RHAKVVRNTK…KNLPSSKGLL (189 aa)) is imidazoleglycerol-phosphate dehydratase.

It in the N-terminal section; belongs to the histidinol-phosphatase family. The protein in the C-terminal section; belongs to the imidazoleglycerol-phosphate dehydratase family. Mg(2+) is required as a cofactor. Requires Zn(2+) as cofactor.

Its subcellular location is the cytoplasm. The enzyme catalyses D-erythro-1-(imidazol-4-yl)glycerol 3-phosphate = 3-(imidazol-4-yl)-2-oxopropyl phosphate + H2O. The catalysed reaction is L-histidinol phosphate + H2O = L-histidinol + phosphate. Its pathway is amino-acid biosynthesis; L-histidine biosynthesis; L-histidine from 5-phospho-alpha-D-ribose 1-diphosphate: step 6/9. It participates in amino-acid biosynthesis; L-histidine biosynthesis; L-histidine from 5-phospho-alpha-D-ribose 1-diphosphate: step 8/9. This is Histidine biosynthesis bifunctional protein HisB from Buchnera aphidicola subsp. Baizongia pistaciae (strain Bp).